The chain runs to 224 residues: Ribonuclease 3 (224 aa).

In terms of domain architecture, RNase III spans 5–127 (LERLCRRLNY…ILAAIYLDGG (123 aa)). Glutamate 40 contributes to the Mg(2+) binding site. Aspartate 44 is a catalytic residue. Residues aspartate 113 and glutamate 116 each coordinate Mg(2+). Glutamate 116 is a catalytic residue. Positions 154–224 (DAKTQLQEFL…AKAMLEQLQG (71 aa)) constitute a DRBM domain.

This sequence belongs to the ribonuclease III family. Homodimer. Requires Mg(2+) as cofactor.

The protein resides in the cytoplasm. It catalyses the reaction Endonucleolytic cleavage to 5'-phosphomonoester.. In terms of biological role, digests double-stranded RNA. Involved in the processing of primary rRNA transcript to yield the immediate precursors to the large and small rRNAs (23S and 16S). Processes some mRNAs, and tRNAs when they are encoded in the rRNA operon. Processes pre-crRNA and tracrRNA of type II CRISPR loci if present in the organism. The chain is Ribonuclease 3 from Legionella pneumophila (strain Paris).